The primary structure comprises 216 residues: Probable transaldolase (216 aa).

The Schiff-base intermediate with substrate role is filled by lysine 85.

It belongs to the transaldolase family. Type 3B subfamily.

Its subcellular location is the cytoplasm. It catalyses the reaction D-sedoheptulose 7-phosphate + D-glyceraldehyde 3-phosphate = D-erythrose 4-phosphate + beta-D-fructose 6-phosphate. Its pathway is carbohydrate degradation; pentose phosphate pathway; D-glyceraldehyde 3-phosphate and beta-D-fructose 6-phosphate from D-ribose 5-phosphate and D-xylulose 5-phosphate (non-oxidative stage): step 2/3. Transaldolase is important for the balance of metabolites in the pentose-phosphate pathway. This Dehalococcoides mccartyi (strain ATCC BAA-2266 / KCTC 15142 / 195) (Dehalococcoides ethenogenes (strain 195)) protein is Probable transaldolase.